The primary structure comprises 454 residues: Innexin-19 (454 aa).

Residues 1-48 are Cytoplasmic-facing; sequence MWRTPASTGPLRQDRQMFFHATLARSFINALSVRGDDDAVDRLNYYYT. Residues 49-69 form a helical membrane-spanning segment; it reads PLILAVCCLVISAKQYGGTPI. The Extracellular segment spans residues 70–118; that stretch reads ECWVNPHSRESMEEYIESYCWIQNTYWIPMYENVPDDHTAREEKQIGYY. Residues 119 to 139 form a helical membrane-spanning segment; sequence QWVPFILIAEALMFSLPCIFW. Over 140–214 the chain is Cytoplasmic; sequence RLCSFQSGLN…SRFLSGQCLS (75 aa). A helical transmembrane segment spans residues 215 to 235; sequence ILHSFTKLLYSMNVVAQFLIL. The Extracellular portion of the chain corresponds to 236 to 300; sequence NACLKSSDFL…ALLINIINEK (65 aa). A helical membrane pass occupies residues 301–321; that stretch reads VFAFLWCWYMILAIITTCSFI. Residues 322 to 454 are Cytoplasmic-facing; sequence YWIANSFIHS…SNPGQTKSFL (133 aa).

The protein belongs to the pannexin family. As to expression, specifically expressed in sensory neurons and interneurons in the head and tail. Expressed in neurons AWC, ASH, AFD, ASI, ADL, ASK, BAG, AWB, and ADF (head sensory neurons); ADA, AIZ, RIC, AIY, and AIM (head interneurons); PHA and PHB (tail sensory neurons); and PVC and PVQ (tail interneurons).

It is found in the cell membrane. Its subcellular location is the cell junction. It localises to the gap junction. In terms of biological role, structural component of the gap junctions that specifically coordinates left-right asymmetry in the developing nervous system. Acts by forming gap junction network linking embryonic neurons and providing electrical coupling between cells, leading to promote or inhibit AWC signaling. Required for the left and right AWC olfactory neurons to establish asymmetric patterns of gene expression during embryogenesis. Acts autonomously. This Caenorhabditis elegans protein is Innexin-19 (inx-19).